A 71-amino-acid chain; its full sequence is ATP synthase subunit c (71 aa).

A run of 2 helical transmembrane segments spans residues 4-24 and 48-68; these read AVIG…GIGI and IIGA…AFMI.

It belongs to the ATPase C chain family. F-type ATPases have 2 components, F(1) - the catalytic core - and F(0) - the membrane proton channel. F(1) has five subunits: alpha(3), beta(3), gamma(1), delta(1), epsilon(1). F(0) has three main subunits: a(1), b(2) and c(10-14). The alpha and beta chains form an alternating ring which encloses part of the gamma chain. F(1) is attached to F(0) by a central stalk formed by the gamma and epsilon chains, while a peripheral stalk is formed by the delta and b chains.

It localises to the cell membrane. Functionally, f(1)F(0) ATP synthase produces ATP from ADP in the presence of a proton or sodium gradient. F-type ATPases consist of two structural domains, F(1) containing the extramembraneous catalytic core and F(0) containing the membrane proton channel, linked together by a central stalk and a peripheral stalk. During catalysis, ATP synthesis in the catalytic domain of F(1) is coupled via a rotary mechanism of the central stalk subunits to proton translocation. Its function is as follows. Key component of the F(0) channel; it plays a direct role in translocation across the membrane. A homomeric c-ring of between 10-14 subunits forms the central stalk rotor element with the F(1) delta and epsilon subunits. The chain is ATP synthase subunit c from Clostridium botulinum (strain Alaska E43 / Type E3).